We begin with the raw amino-acid sequence, 576 residues long: Lysine--tRNA ligase (576 aa).

2 residues coordinate Mg(2+): Glu-413 and Glu-420.

This sequence belongs to the class-II aminoacyl-tRNA synthetase family. In terms of assembly, homodimer. The cofactor is Mg(2+).

It localises to the cytoplasm. It carries out the reaction tRNA(Lys) + L-lysine + ATP = L-lysyl-tRNA(Lys) + AMP + diphosphate. The chain is Lysine--tRNA ligase from Bacteroides thetaiotaomicron (strain ATCC 29148 / DSM 2079 / JCM 5827 / CCUG 10774 / NCTC 10582 / VPI-5482 / E50).